We begin with the raw amino-acid sequence, 312 residues long: tRNA pseudouridine synthase B (312 aa).

The active-site Nucleophile is Asp38.

It belongs to the pseudouridine synthase TruB family. Type 1 subfamily.

It carries out the reaction uridine(55) in tRNA = pseudouridine(55) in tRNA. Its function is as follows. Responsible for synthesis of pseudouridine from uracil-55 in the psi GC loop of transfer RNAs. In Syntrophus aciditrophicus (strain SB), this protein is tRNA pseudouridine synthase B.